A 230-amino-acid chain; its full sequence is N-(5'-phosphoribosyl)anthranilate isomerase (230 aa).

It belongs to the TrpF family.

It catalyses the reaction N-(5-phospho-beta-D-ribosyl)anthranilate = 1-(2-carboxyphenylamino)-1-deoxy-D-ribulose 5-phosphate. The protein operates within amino-acid biosynthesis; L-tryptophan biosynthesis; L-tryptophan from chorismate: step 3/5. This Syntrophus aciditrophicus (strain SB) protein is N-(5'-phosphoribosyl)anthranilate isomerase.